Consider the following 413-residue polypeptide: Tyrosine--tRNA ligase (413 aa).

L-tyrosine is bound at residue Tyr34. The 'HIGH' region signature appears at 39–48; the sequence is PTSHSLTVGH. L-tyrosine-binding residues include Tyr164 and Gln168. A 'KMSKS' region motif is present at residues 225 to 229; the sequence is KFGKS. An ATP-binding site is contributed by Lys228. In terms of domain architecture, S4 RNA-binding spans 347–413; it reads ILLVDALVQT…GKKNNALIVF (67 aa).

Belongs to the class-I aminoacyl-tRNA synthetase family. TyrS type 1 subfamily. In terms of assembly, homodimer.

The protein resides in the cytoplasm. The enzyme catalyses tRNA(Tyr) + L-tyrosine + ATP = L-tyrosyl-tRNA(Tyr) + AMP + diphosphate + H(+). Catalyzes the attachment of tyrosine to tRNA(Tyr) in a two-step reaction: tyrosine is first activated by ATP to form Tyr-AMP and then transferred to the acceptor end of tRNA(Tyr). This chain is Tyrosine--tRNA ligase, found in Onion yellows phytoplasma (strain OY-M).